The primary structure comprises 1397 residues: Clustered mitochondria protein homolog (1397 aa).

One copy of the TPR 1 repeat lies at 30 to 63 (LPSFIDQKGDLKIPSHYEETITDLKLTLTVIPKT). Disordered regions lie at residues 158 to 203 (TARG…LSRE) and 526 to 555 (DAAPPSEEEDDAGAEQEKKEEGKAEEDEEE). Residues 161–203 (GEAEKSDTNEEEQEQGKGKVGKPNEKESGETKETDSQPELSRE) are compositionally biased toward basic and acidic residues. The 273-residue stretch at 368 to 640 (DSSRSQLMLI…RTTPRDIEFI (273 aa)) folds into the Clu domain. One copy of the TPR 2 repeat lies at 559–595 (EKVLYGLSSDSQKILEDKSFEKPLKLLSEVFHLKPHG). Basic and acidic residues-rich tracts occupy residues 686 to 703 (EGKLEKDGSKGTNSEEKS), 812 to 831 (EKVEKDRREAEEAEKAKERA), 839 to 860 (SDDKNQETIENSDAKSKENTES), and 1019 to 1033 (QREQKQESVVDNVEK). Disordered regions lie at residues 686–707 (EGKLEKDGSKGTNSEEKSQIAL), 812–869 (EKVE…EEQP), and 1019–1050 (QREQKQESVVDNVEKKHSKKSKKKSPALPIEN). The segment covering 1034-1043 (KHSKKSKKKS) has biased composition (basic residues). TPR repeat units follow at residues 1167 to 1200 (IAAYMNSAYFELANSQIANSLKLYLRAMQLWTST) and 1209 to 1242 (VNLLTNVADSLYYAKDYESALKLFNAALEACSHL). Composition is skewed to polar residues over residues 1314–1338 (AQSKKSPPPTQTVAPNARVSASQAS) and 1362–1373 (PQSDPQIANQSV). The interval 1314-1397 (AQSKKSPPPT…AKSKSKHTKA (84 aa)) is disordered. Over residues 1375–1384 (DILKFIEGKS) the composition is skewed to basic and acidic residues. Basic residues predominate over residues 1386–1397 (PNAKSKSKHTKA).

This sequence belongs to the CLU family. As to quaternary structure, may associate with the eukaryotic translation initiation factor 3 (eIF-3) complex.

It localises to the cytoplasm. Functionally, mRNA-binding protein involved in proper cytoplasmic distribution of mitochondria. This Lodderomyces elongisporus (strain ATCC 11503 / CBS 2605 / JCM 1781 / NBRC 1676 / NRRL YB-4239) (Yeast) protein is Clustered mitochondria protein homolog.